A 567-amino-acid polypeptide reads, in one-letter code: MRKQLGEAVGEVKTDIEIARAARKQPIMEVGARLGIPPEHLLPYGHDKAKVSAEFIAAQREKKNGRLILVTAINPTPAGEGKTTTTVGLVDGLNRIGKKAIVCIREASLGPCFGIKGGAAGGGYAQVVPMEDINLHFTGDFHAITSAHNLLSALIDNHIYWGNEQAIDIRRIAWRRVMDMNDRALRHIVGSLGGVANGYPRETGFDITVASEVMAILCLAMDIRDLERRLGNIIIGYRRDKSPVYARDIKADGAMAVLLKDAMQPNLVQTLENNPAFVHGGPFANIAHGCNSVVATTTALKLADYVVTEAGFGADLGAEKFFDIKCRKAGLMPDAAVIVATVRAIKMNGGVKKEDLAKENVEALRKGCPNLGRHIQNVKKFGVPVLVAINHFTSDTEAEIQAIKDYVRTLGSEAVLCKHWAEGSAGIEELADKVADLADAGHSQFSPLYPDEMPLFQKIEAIAKDIYHASEVIADKLVRDQLRIWEDQGYGHLPICMAKTQYSFSTDPNLRGAPTGHTVPIREVRLAAGAGFIVVITGEIMTMPGLPKVPSSERIRLDEEGYIEGLF.

An ATP-binding site is contributed by 76 to 83 (TPAGEGKT).

Belongs to the formate--tetrahydrofolate ligase family.

The catalysed reaction is (6S)-5,6,7,8-tetrahydrofolate + formate + ATP = (6R)-10-formyltetrahydrofolate + ADP + phosphate. The protein operates within one-carbon metabolism; tetrahydrofolate interconversion. The sequence is that of Formate--tetrahydrofolate ligase from Sinorhizobium medicae (strain WSM419) (Ensifer medicae).